We begin with the raw amino-acid sequence, 246 residues long: NADH-quinone oxidoreductase subunit C (246 aa).

The protein belongs to the complex I 30 kDa subunit family. In terms of assembly, NDH-1 is composed of 14 different subunits. Subunits NuoB, C, D, E, F, and G constitute the peripheral sector of the complex.

The protein localises to the cell inner membrane. It catalyses the reaction a quinone + NADH + 5 H(+)(in) = a quinol + NAD(+) + 4 H(+)(out). Functionally, NDH-1 shuttles electrons from NADH, via FMN and iron-sulfur (Fe-S) centers, to quinones in the respiratory chain. The immediate electron acceptor for the enzyme in this species is believed to be ubiquinone. Couples the redox reaction to proton translocation (for every two electrons transferred, four hydrogen ions are translocated across the cytoplasmic membrane), and thus conserves the redox energy in a proton gradient. The protein is NADH-quinone oxidoreductase subunit C of Halorhodospira halophila (strain DSM 244 / SL1) (Ectothiorhodospira halophila (strain DSM 244 / SL1)).